A 643-amino-acid polypeptide reads, in one-letter code: MNANPKFLSADAHVDAAAVAPLPNSRKVYVTGSQPDIRVPMREITQADTPTGFGGEKNPPIYVYDTSGPYTDPDAKIDIRAGLPALRQRWIEARGDTETLPGLSSQYGRERAADPATADLRFPGLHRNPRRARAGKNVTQMHYARQGIITPEMEFIAIRENQRRAEYLESLKASGPNGAKLAAMMGRQHPGQAFGAAAFGGNAPSEITPEFVRDEVARGRAIIPANINHPESEPMIIGRNFLVKINANIGNSAVTSSIGEEVDKMTWAIRWGGDTVMDLSTGKHIHETREWIIRNSPVPIGTVPIYQALEKVNGKAEELTWEIFRDTLIEQAEQGVDYFTIHAGVRLQYVPLTANRMTGIVSRGGSIMAKWCLAHHKESFLYEHFEEICEIMKAYDVSFSLGDGLRPGSIYDANDEAQLGELKTLGELTQIAWKHDVQVMIEGPGHVPMQLIKENMDLQLDWCKEAPFYTLGPLTTDIAPGYDHITSGIGAAMIGWFGTAMLCYVTPKEHLGLPNKDDVKEGIITYKLAAHAADLAKGHPGAQVRDNALSKARFEFRWEDQFNLGLDPDKAREFHDETLPKDSAKVAHFCSMCGPHFCSMKITQDVREFAAQQGVSEADALQKGMEVKAVEFVKSGSEIYHRQ.

Residues Asn-248, Met-277, Tyr-306, His-342, Ser-362–Gly-364, Asp-403–Arg-406, and Glu-442 contribute to the substrate site. His-446 contributes to the Zn(2+) binding site. Residue Tyr-469 coordinates substrate. A Zn(2+)-binding site is contributed by His-510. Residues Cys-590, Cys-593, and Cys-598 each contribute to the [4Fe-4S] cluster site.

Belongs to the ThiC family. As to quaternary structure, homodimer. [4Fe-4S] cluster serves as cofactor.

It catalyses the reaction 5-amino-1-(5-phospho-beta-D-ribosyl)imidazole + S-adenosyl-L-methionine = 4-amino-2-methyl-5-(phosphooxymethyl)pyrimidine + CO + 5'-deoxyadenosine + formate + L-methionine + 3 H(+). The protein operates within cofactor biosynthesis; thiamine diphosphate biosynthesis. Its function is as follows. Catalyzes the synthesis of the hydroxymethylpyrimidine phosphate (HMP-P) moiety of thiamine from aminoimidazole ribotide (AIR) in a radical S-adenosyl-L-methionine (SAM)-dependent reaction. The polypeptide is Phosphomethylpyrimidine synthase (Burkholderia multivorans (strain ATCC 17616 / 249)).